The primary structure comprises 628 residues: Forkhead box protein O (628 aa).

Thr50 carries the post-translational modification Phosphothreonine; by PKB/AKT1. Position 81 is a phosphoserine (Ser81). Positions 101-207 (WGNLSYADLI…ETSRYEKRRG (107 aa)) form a DNA-binding region, fork-head. 2 disordered regions span residues 188 to 210 (KSVR…GRAK) and 223 to 270 (GLND…SSCG). The residue at position 196 (Ser196) is a Phosphoserine; by PKB/AKT1. 2 stretches are compositionally biased toward polar residues: residues 227–236 (ATPSPSSSVS) and 261–270 (RASSNASSCG). Ser264 carries the post-translational modification Phosphoserine; by PKB/AKT1. Phosphoserine occurs at positions 267, 268, and 273. 2 disordered regions span residues 327–373 (SAAS…SLQP) and 398–451 (NSVT…QQQQ). Over residues 334–343 (TQPPPPPYPA) the composition is skewed to pro residues. The segment covering 344–359 (PQQQQQQQPQQQQAYT) has biased composition (low complexity). A compositionally biased stretch (polar residues) spans 411-423 (SEPSSDSLNTYSN). A compositionally biased stretch (low complexity) spans 438 to 451 (QQQRQQQQQQQQQQ).

As to quaternary structure, interacts with melt.

It is found in the cytoplasm. Its subcellular location is the nucleus. Its function is as follows. Transcription factor involved in the regulation of the insulin signaling pathway. Consistently activates both the downstream target Thor\d4EBP and the feedback control target InR. Involved in negative regulation of the cell cycle, modulating cell growth and proliferation. In response to cellular stresses, such as nutrient deprivation or increased levels of reactive oxygen species, foxo is activated and inhibits growth through the action of target genes such as Thor. Foxo activated in the adult fat body can regulate lifespan in adults; an insulin peptide itself may function as one secondary messenger of insulin-regulated aging. Also regulates Lip4, homolog of human acid lipases, thereby acting as a key modulator of lipid metabolism by insulin signaling and integrates insulin responses to glucose and lipid homeostasis. The sequence is that of Forkhead box protein O from Drosophila willistoni (Fruit fly).